A 118-amino-acid chain; its full sequence is NADPH-dependent 7-cyano-7-deazaguanine reductase (118 aa).

Cysteine 31 functions as the Thioimide intermediate in the catalytic mechanism. Aspartate 38 acts as the Proton donor in catalysis. Substrate is bound by residues 53-55 (VEL) and 72-73 (YE).

This sequence belongs to the GTP cyclohydrolase I family. QueF type 1 subfamily.

It is found in the cytoplasm. The enzyme catalyses 7-aminomethyl-7-carbaguanine + 2 NADP(+) = 7-cyano-7-deazaguanine + 2 NADPH + 3 H(+). It participates in tRNA modification; tRNA-queuosine biosynthesis. Functionally, catalyzes the NADPH-dependent reduction of 7-cyano-7-deazaguanine (preQ0) to 7-aminomethyl-7-deazaguanine (preQ1). The chain is NADPH-dependent 7-cyano-7-deazaguanine reductase from Chlorobium phaeobacteroides (strain BS1).